The following is a 907-amino-acid chain: Envelope glycoprotein B (907 aa).

The first 24 residues, 1 to 24 (MESRIWCLVVCVNLCIVCLGAAVS), serve as a signal peptide directing secretion. Residues 25–751 (SSSTRGTSAT…EGVATFLKNP (727 aa)) lie on the Virion surface side of the membrane. The tract at residues 29 to 62 (RGTSATHSHHSSHTTSAAHSRSGSVSQRVTSSQT) is disordered. Over residues 41 to 62 (HTTSAAHSRSGSVSQRVTSSQT) the composition is skewed to low complexity. N-linked (GlcNAc...) asparagine; by host glycosylation is found at Asn-68, Asn-73, and Asn-85. Intrachain disulfides connect Cys-94–Cys-551, Cys-111–Cys-507, Cys-185–Cys-250, and Cys-344–Cys-391. The involved in fusion and/or binding to host membrane stretch occupies residues 152–158 (SYAYIHT). Asn-208 carries an N-linked (GlcNAc...) asparagine; by host glycan. Residues 237–244 (GSTWLYRE) form an involved in fusion and/or binding to host membrane region. N-linked (GlcNAc...) asparagine; by host glycans are attached at residues Asn-281, Asn-286, Asn-302, Asn-341, Asn-383, Asn-405, Asn-409, Asn-417, Asn-447, Asn-452, Asn-456, Asn-466, Asn-555, and Asn-586. A disulfide bridge links Cys-574 with Cys-611. Residues 697–749 (VEDKVVDPLPPYLKGLDDLMSGLGAAGKAVGVAIGAVGGAVASVVEGVATFLK) are hydrophobic membrane proximal region. Residues 752-772 (FGAFTIILVAIAVVIITYLIY) traverse the membrane as a helical segment. At 773-907 (TRQRRLCTQP…LKDSDEEENV (135 aa)) the chain is on the intravirion side. Composition is skewed to polar residues over residues 798-810 (VTSGSTKDTSLQA) and 860-877 (RAQQNGTDSLDGRTGTQD). Disordered regions lie at residues 798–838 (VTSG…TAAP) and 857–907 (AEQR…EENV). Over residues 878–887 (KGQKPNLLDR) the composition is skewed to basic and acidic residues. An Internalization motif motif is present at residues 895 to 898 (YRHL).

Belongs to the herpesviridae glycoprotein B family. In terms of assembly, homotrimer; disulfide-linked. Binds to heparan sulfate proteoglycans. Interacts with gH/gL heterodimer. Post-translationally, a proteolytic cleavage by host furin generates two subunits that remain linked by disulfide bonds.

It localises to the virion membrane. The protein resides in the host cell membrane. Its subcellular location is the host endosome membrane. The protein localises to the host Golgi apparatus membrane. Envelope glycoprotein that forms spikes at the surface of virion envelope. Essential for the initial attachment to heparan sulfate moieties of the host cell surface proteoglycans. Involved in fusion of viral and cellular membranes leading to virus entry into the host cell. Following initial binding to its host receptors, membrane fusion is mediated by the fusion machinery composed at least of gB and the heterodimer gH/gL. May be involved in the fusion between the virion envelope and the outer nuclear membrane during virion egress. The sequence is that of Envelope glycoprotein B from Human cytomegalovirus (strain Merlin) (HHV-5).